Here is a 102-residue protein sequence, read N- to C-terminus: Small ribosomal subunit protein uS10 (102 aa).

This sequence belongs to the universal ribosomal protein uS10 family. In terms of assembly, part of the 30S ribosomal subunit.

Its function is as follows. Involved in the binding of tRNA to the ribosomes. The polypeptide is Small ribosomal subunit protein uS10 (Leifsonia xyli subsp. xyli (strain CTCB07)).